A 239-amino-acid chain; its full sequence is Putative ABC transporter ATP-binding protein BR1368/BS1330_I1363 (239 aa).

An ABC transporter domain is found at 5–234 (LSLDRVSVSR…EQVHLHYVEA (230 aa)). 37–44 (GDNGVGKT) serves as a coordination point for ATP.

The protein belongs to the ABC transporter superfamily.

Its subcellular location is the cell inner membrane. Its function is as follows. Probably part of an ABC transporter complex. Responsible for energy coupling to the transport system. This is Putative ABC transporter ATP-binding protein BR1368/BS1330_I1363 from Brucella suis biovar 1 (strain 1330).